Consider the following 336-residue polypeptide: F420-dependent glucose-6-phosphate dehydrogenase (336 aa).

D39 lines the coenzyme F420-(gamma-Glu)n pocket. The Proton donor role is filled by H40. Coenzyme F420-(gamma-Glu)n contacts are provided by residues T76 and 107–108 (TG). The active-site Proton acceptor is E109. Residues N112, 177-178 (GG), and 180-181 (AV) each bind coenzyme F420-(gamma-Glu)n. Residues T195, K198, K259, and R283 each coordinate substrate.

It belongs to the F420-dependent glucose-6-phosphate dehydrogenase family. In terms of assembly, homodimer.

It carries out the reaction oxidized coenzyme F420-(gamma-L-Glu)(n) + D-glucose 6-phosphate + H(+) = 6-phospho-D-glucono-1,5-lactone + reduced coenzyme F420-(gamma-L-Glu)(n). Its function is as follows. Catalyzes the coenzyme F420-dependent oxidation of glucose 6-phosphate (G6P) to 6-phosphogluconolactone. Appears to have a role in resistance to oxidative stress, via its consumption of G6P that serves as a source of reducing power to combat oxidative stress in mycobacteria. In Mycobacterium avium (strain 104), this protein is F420-dependent glucose-6-phosphate dehydrogenase.